Reading from the N-terminus, the 123-residue chain is Cyclic ether formation enzyme xenC (123 aa).

A signal peptide spans 1 to 24; the sequence is MSSLLLSDVLSYGIFGFSALCVQA. Helical transmembrane passes span 58–78 and 102–122; these read SALRYVFVSINIAVCVLLWSP and LGESPIPHLLLVSTVGAAILV.

The protein belongs to the cyclic ether formation enzyme xenC family.

The protein resides in the membrane. Its pathway is mycotoxin biosynthesis. Functionally, cyclic ether formation enzyme; part of the gene cluster that mediates the biosynthesis of xenoacremones such as xenoacremone A, a compound that shows inhibitory activity toward the PI3K/AKT signaling pathway and which has the ability to induce apoptosis of A549 lung cancer cells. Within the pathway, cooperation of the hybrid PKS-NRPS xenE and the trans-acting enoyl reductase xenG is responsible for the formation of the reduced tyrosine-nonaketide derivative. The alpha/beta hydrolase xenA then accelerates intramolecular nucleophilic attack to give a pyrrolidone derivative. Subsequently, three enzymes, xenF, xenD, and xenC, coordinately participate in the conversion to xenoacremone B. XenF catalyzes sigmatropic rearrangement to form an A-ring, which leads to an unusual intermediate with a hexane ring, which is required for the formation of the tricarbocyclic product. Epoxidation catalyzed by xenD and the formation of the paracyclophane ether catalyzed by xenC initiate a spontaneous intramolecular Diels-Alder (IMDA) reaction to yield xenoacremone B. Spontaneous hydration of xenoacremone B leads to the formation of xenoacremone A, which undergoes subsequent methylation to afford xenoacremone C. In Xenoacremonium sinensis (Endophyte fungus), this protein is Cyclic ether formation enzyme xenC.